The primary structure comprises 353 residues: S-adenosylmethionine:tRNA ribosyltransferase-isomerase (353 aa).

This sequence belongs to the QueA family. As to quaternary structure, monomer.

It is found in the cytoplasm. The enzyme catalyses 7-aminomethyl-7-carbaguanosine(34) in tRNA + S-adenosyl-L-methionine = epoxyqueuosine(34) in tRNA + adenine + L-methionine + 2 H(+). It participates in tRNA modification; tRNA-queuosine biosynthesis. In terms of biological role, transfers and isomerizes the ribose moiety from AdoMet to the 7-aminomethyl group of 7-deazaguanine (preQ1-tRNA) to give epoxyqueuosine (oQ-tRNA). In Baumannia cicadellinicola subsp. Homalodisca coagulata, this protein is S-adenosylmethionine:tRNA ribosyltransferase-isomerase.